A 313-amino-acid polypeptide reads, in one-letter code: Metaxin-3 (313 aa).

Positions 280-313 (EKMDDNLRSSPQHRPHRHEAKPSAPASDRNSTPA) are disordered.

The protein belongs to the metaxin family. In terms of assembly, part of a large protein complex spanning both mitochondrial membranes termed the mitochondrial intermembrane space bridging (MIB) complex.

Its subcellular location is the mitochondrion. It is found in the mitochondrion outer membrane. In terms of biological role, could function in transport of proteins into the mitochondrion. The polypeptide is Metaxin-3 (mtx3) (Danio rerio (Zebrafish)).